We begin with the raw amino-acid sequence, 182 residues long: Large ribosomal subunit protein uL22 (182 aa).

The disordered stretch occupies residues 159–182; the sequence is AAAKPKATAKKATGEKSKAKTKAN.

This sequence belongs to the universal ribosomal protein uL22 family. Part of the 50S ribosomal subunit.

This protein binds specifically to 23S rRNA; its binding is stimulated by other ribosomal proteins, e.g. L4, L17, and L20. It is important during the early stages of 50S assembly. It makes multiple contacts with different domains of the 23S rRNA in the assembled 50S subunit and ribosome. In terms of biological role, the globular domain of the protein is located near the polypeptide exit tunnel on the outside of the subunit, while an extended beta-hairpin is found that lines the wall of the exit tunnel in the center of the 70S ribosome. In Cytophaga hutchinsonii (strain ATCC 33406 / DSM 1761 / CIP 103989 / NBRC 15051 / NCIMB 9469 / D465), this protein is Large ribosomal subunit protein uL22.